The sequence spans 377 residues: 3-dehydroquinate synthase (377 aa).

NAD(+)-binding positions include 115 to 119 (GVIGD), 139 to 140 (TS), K152, and K161. Zn(2+) is bound by residues E194, H256, and H275.

Belongs to the sugar phosphate cyclases superfamily. Dehydroquinate synthase family. Requires NAD(+) as cofactor. Co(2+) is required as a cofactor. The cofactor is Zn(2+).

Its subcellular location is the cytoplasm. It carries out the reaction 7-phospho-2-dehydro-3-deoxy-D-arabino-heptonate = 3-dehydroquinate + phosphate. Its pathway is metabolic intermediate biosynthesis; chorismate biosynthesis; chorismate from D-erythrose 4-phosphate and phosphoenolpyruvate: step 2/7. Functionally, catalyzes the conversion of 3-deoxy-D-arabino-heptulosonate 7-phosphate (DAHP) to dehydroquinate (DHQ). This chain is 3-dehydroquinate synthase, found in Rhizobium meliloti (strain 1021) (Ensifer meliloti).